A 134-amino-acid chain; its full sequence is ATP synthase epsilon chain (134 aa).

The protein belongs to the ATPase epsilon chain family. In terms of assembly, F-type ATPases have 2 components, CF(1) - the catalytic core - and CF(0) - the membrane proton channel. CF(1) has five subunits: alpha(3), beta(3), gamma(1), delta(1), epsilon(1). CF(0) has three main subunits: a, b and c.

The protein localises to the cell membrane. Functionally, produces ATP from ADP in the presence of a proton gradient across the membrane. The polypeptide is ATP synthase epsilon chain (Staphylococcus aureus (strain USA300)).